Here is a 635-residue protein sequence, read N- to C-terminus: Sodium- and chloride-dependent transporter XTRP3B (635 aa).

Residues 1 to 38 (MESPSAHAVSLPEDEELQPWGGAGGPGQHPGRPRSTEC) form a disordered region. Residues 1–56 (MESPSAHAVSLPEDEELQPWGGAGGPGQHPGRPRSTECAHPGVVEKVRPKWDNPLQ) are Cytoplasmic-facing. Residues 57-77 (FLLVCISYAVGLGNVWRFPYL) form a helical membrane-spanning segment. Residues 78-85 (CQMYGGGN) lie on the Extracellular side of the membrane. A helical membrane pass occupies residues 86–106 (FLVPYIIMLIVEGMPLLYLEL). Residues 107 to 127 (AVGQRMRQGSIGAWRTISPYL) are Cytoplasmic-facing. A helical transmembrane segment spans residues 128-148 (SGVGIASLVVSFLASVYFNVI). At 149–208 (NTWALWYLFHSFQDPLPWSVCPLNSNHTGYDEECEKASSTQYFWYRKTLNISPSIQENGG) the chain is on the extracellular side. Asn174 carries an N-linked (GlcNAc...) asparagine glycan. Residues 209 to 229 (VQWEPALCLTLAWLMVYLCIL) traverse the membrane as a helical segment. The Cytoplasmic portion of the chain corresponds to 230 to 237 (RGTESTGK). A helical transmembrane segment spans residues 238 to 258 (VVYFTTSLPYFVLIIYLVRGL). Topologically, residues 259-284 (TLHGATNGLAYMFTPKIEQLANPKAW) are extracellular. A helical membrane pass occupies residues 285–305 (INAATQIFFSLGLGCGGLIAF). The Cytoplasmic segment spans residues 306–319 (ASYNEPSNDCQKHA). The chain crosses the membrane as a helical span at residues 320-340 (LIVSVINSTTAIFSSIVTFSI). The Extracellular segment spans residues 341 to 432 (YGFKATFNYE…EAIKNMEVSQ (92 aa)). N-linked (GlcNAc...) asparagine glycosylation occurs at Asn400. The chain crosses the membrane as a helical span at residues 433 to 453 (LWSVLYFFMLLTLGMGSMVGT). Topologically, residues 454–474 (GTAILTPLTDSKIISSYLPKE) are cytoplasmic. Residues 475 to 495 (AISGLVCLLNCAIGMVFTMEA) traverse the membrane as a helical segment. At 496–508 (GNYWFDLFNDYTA) the chain is on the extracellular side. A helical transmembrane segment spans residues 509-529 (TLSLLLIVLVETIAVCYVYGL). Over 530–547 (KRFESDLRAMTGRTLSWY) the chain is Cytoplasmic. The chain crosses the membrane as a helical span at residues 548–568 (WKVMWAFVSPLLIVGLFIFYL). The Extracellular portion of the chain corresponds to 569-597 (SDYILTGTLQYQAWDATQGHVVTKDYPTY). The chain crosses the membrane as a helical span at residues 598–618 (ALAVIGLLVASSTMCIPLVAL). Residues 619 to 635 (GTFVTRHFKIREQFSAA) are Cytoplasmic-facing.

This sequence belongs to the sodium:neurotransmitter symporter (SNF) (TC 2.A.22) family. SLC6A20 subfamily. As to quaternary structure, interacts with CLTRN. Detected only in kidney and lung.

It localises to the apical cell membrane. Functionally, does not show transporter activity with a range of tested amino acids including proline, glutamine, glutamic acid, leucine, alanine, histidine, glycine and arginine. The protein is Sodium- and chloride-dependent transporter XTRP3B (Slc6a20b) of Mus musculus (Mouse).